The sequence spans 243 residues: Adenosylcobinamide-GDP ribazoletransferase (243 aa).

The next 6 helical transmembrane spans lie at 33–53 (FLPV…LLAP), 59–79 (IIIV…HIDG), 105–125 (IGAF…TLAY), 127–147 (TENM…VFAA), 172–192 (VISI…GAII), and 223–243 (TIEI…SIII).

The protein belongs to the CobS family. The cofactor is Mg(2+).

It localises to the cell membrane. The catalysed reaction is alpha-ribazole + adenosylcob(III)inamide-GDP = adenosylcob(III)alamin + GMP + H(+). It carries out the reaction alpha-ribazole 5'-phosphate + adenosylcob(III)inamide-GDP = adenosylcob(III)alamin 5'-phosphate + GMP + H(+). It functions in the pathway cofactor biosynthesis; adenosylcobalamin biosynthesis; adenosylcobalamin from cob(II)yrinate a,c-diamide: step 7/7. Joins adenosylcobinamide-GDP and alpha-ribazole to generate adenosylcobalamin (Ado-cobalamin). Also synthesizes adenosylcobalamin 5'-phosphate from adenosylcobinamide-GDP and alpha-ribazole 5'-phosphate. The chain is Adenosylcobinamide-GDP ribazoletransferase from Alkaliphilus oremlandii (strain OhILAs) (Clostridium oremlandii (strain OhILAs)).